A 371-amino-acid chain; its full sequence is Integrator complex assembly factor WDR73 (371 aa).

WD repeat units lie at residues 81–121, 273–313, and 333–371; these read FSDR…DVIE, SPDP…GKKT, and DSAPLVTTHTWHPRKPRTLLSAASDSSLHVWDWVDLQAS.

Belongs to the WD repeat WDR73 family. As to quaternary structure, interacts with INTS9 and INTS11; the interaction is direct. Part of the multiprotein complex composed of BRAT1, WDR73, as well as integrator complex subunits INTS9 and INTS11.

The protein resides in the cytoplasm. It localises to the cytoskeleton. It is found in the spindle. The protein localises to the spindle pole. Its subcellular location is the cleavage furrow. In terms of biological role, component of a multiprotein complex required for the assembly of the RNA endonuclease module of the integrator complex. Associates with INTS9 and INTS11 in the cytoplasm, stabilizing the INTS9-INTS11 heterodimer and blocking the active site of INTS11. BRAT1 then joins the complex and plugs the active site of INTS11, leading to WDR73 release and nuclear import of INTS9 and INTS11. The chain is Integrator complex assembly factor WDR73 (Wdr73) from Mus musculus (Mouse).